A 111-amino-acid chain; its full sequence is ATP-dependent Clp protease adapter protein ClpS (111 aa).

This sequence belongs to the ClpS family. Binds to the N-terminal domain of the chaperone ClpA.

Involved in the modulation of the specificity of the ClpAP-mediated ATP-dependent protein degradation. The chain is ATP-dependent Clp protease adapter protein ClpS from Corynebacterium aurimucosum (strain ATCC 700975 / DSM 44827 / CIP 107346 / CN-1) (Corynebacterium nigricans).